Here is a 450-residue protein sequence, read N- to C-terminus: UDP-N-acetylmuramoylalanine--D-glutamate ligase (450 aa).

119 to 125 (GSNGKTT) contacts ATP.

Belongs to the MurCDEF family.

It localises to the cytoplasm. The catalysed reaction is UDP-N-acetyl-alpha-D-muramoyl-L-alanine + D-glutamate + ATP = UDP-N-acetyl-alpha-D-muramoyl-L-alanyl-D-glutamate + ADP + phosphate + H(+). The protein operates within cell wall biogenesis; peptidoglycan biosynthesis. In terms of biological role, cell wall formation. Catalyzes the addition of glutamate to the nucleotide precursor UDP-N-acetylmuramoyl-L-alanine (UMA). The sequence is that of UDP-N-acetylmuramoylalanine--D-glutamate ligase from Streptococcus pneumoniae (strain Taiwan19F-14).